The following is a 62-amino-acid chain: 6.7 kDa chloroplast outer envelope membrane protein (62 aa).

Residues 1 to 17 (MESVAKPATTKEGSAKQ) lie on the Chloroplast intermembrane side of the membrane. The chain crosses the membrane as a helical span at residues 18-40 (AAIVVGVLALGWFAIQVAFIPLF). Over 41-62 (NKVRGGGSDKKDDDVNAFTPDT) the chain is Cytoplasmic.

The protein localises to the plastid. The protein resides in the chloroplast outer membrane. The sequence is that of 6.7 kDa chloroplast outer envelope membrane protein from Spinacia oleracea (Spinach).